Reading from the N-terminus, the 227-residue chain is 2,3-bisphosphoglycerate-dependent phosphoglycerate mutase (227 aa).

Substrate contacts are provided by residues 7 to 14, 20 to 21, Arg59, 86 to 89, Lys97, 113 to 114, and 182 to 183; these read RHGFSEWN, TG, ERHY, RR, and GN. His8 (tele-phosphohistidine intermediate) is an active-site residue. Glu86 acts as the Proton donor/acceptor in catalysis.

This sequence belongs to the phosphoglycerate mutase family. BPG-dependent PGAM subfamily. As to quaternary structure, homodimer.

It carries out the reaction (2R)-2-phosphoglycerate = (2R)-3-phosphoglycerate. Its pathway is carbohydrate degradation; glycolysis; pyruvate from D-glyceraldehyde 3-phosphate: step 3/5. In terms of biological role, catalyzes the interconversion of 2-phosphoglycerate and 3-phosphoglycerate. In Pasteurella multocida (strain Pm70), this protein is 2,3-bisphosphoglycerate-dependent phosphoglycerate mutase.